The following is a 369-amino-acid chain: Spore membrane assembly protein 2 (369 aa).

Over 1-6 (MLFPKR) the chain is Cytoplasmic. Residues 7–27 (LIVWGVLLILSLSQFVLYLPA) traverse the membrane as a helical segment. The Lumenal portion of the chain corresponds to 28–220 (TTCTNSKGLR…NLAFILMMFN (193 aa)). The chain crosses the membrane as a helical span at residues 221 to 241 (GMVFYFAVLEIIVGFLSICVV). Topologically, residues 242–265 (SAFGGALSVGKRHRLFPMLLKSSS) are cytoplasmic. Residues 266–286 (SILVVIATLTILCNIVYLIAL) form a helical membrane-spanning segment. Over 287–319 (KTLEPEEVTDVGSDNAAVHTTGWELLKVNVGSG) the chain is Lumenal. Residues 320-340 (FIMGLARYAIQWVLLVLAFLA) form a helical membrane-spanning segment. Topologically, residues 341–369 (ANHYKAKPKKSDKYTEDTSNSPSPDLMEK) are cytoplasmic. A disordered region spans residues 348–369 (PKKSDKYTEDTSNSPSPDLMEK).

The protein belongs to the SMA2 family.

It is found in the prospore membrane. It localises to the endoplasmic reticulum. Involved in spore and ascus formation. Required for the efficient assembly of the precursors of the prospore membrane to a continuous prospore membrane. This chain is Spore membrane assembly protein 2 (SMA2), found in Saccharomyces cerevisiae (strain ATCC 204508 / S288c) (Baker's yeast).